A 340-amino-acid polypeptide reads, in one-letter code: MSESLAEVVLSLDEVHALALRVLTHNGMSAAHAQAIANVITQGQRDECHSHGVYRLLVCVRSLKKGKVDPQAVPTLRRLSSSIVAVDAHRGFSLLSFETGLPVLVEMAKQHGIAAMAINHCYHFSALWPEVEAIAAEGLVGIAMNPSHSWVAPEGGREPVFGTNPIAFAWPRPDGVPFVFDFATSAIARGDIELHAKQGKAIPPHWAIDADGQPTTDPKAALQGAMRTFGGHKGSALAAMVELLGGALIGDMTSRESMAFDEGVGATPCHGELVIAFDPKVFLGDELDAGLARGERMFASITGQGARLPSQRRFDARARSIAHGVRIPKALYDEILTLLD.

Ser-50 serves as the catalytic Charge relay system. The Proton donor role is filled by His-51. Arg-55 lines the substrate pocket. 123 to 127 (HFSAL) is an NADP(+) binding site. Thr-163 is a binding site for substrate. 181–183 (DFA) is an NADP(+) binding site. 189 to 190 (RG) lines the substrate pocket. Asp-191 functions as the Charge relay system in the catalytic mechanism. NADP(+)-binding positions include 232-233 (HK) and 307-313 (RLPSQRR).

The protein belongs to the LDH2/MDH2 oxidoreductase family. In terms of assembly, homodimer.

It catalyses the reaction L-proline + NAD(+) = 1-pyrroline-2-carboxylate + NADH + H(+). The catalysed reaction is L-proline + NADP(+) = 1-pyrroline-2-carboxylate + NADPH + H(+). In terms of biological role, catalyzes the reduction of Delta(1)-pyrroline-2-carboxylate (Pyr2C) to L-proline, using NADPH as the electron donor. May be involved in a degradation pathway that converts trans-3-hydroxy-L-proline (t3LHyp) to L-proline. The protein is Delta(1)-pyrroline-2-carboxylate reductase 1 of Burkholderia ambifaria (strain ATCC BAA-244 / DSM 16087 / CCUG 44356 / LMG 19182 / AMMD) (Burkholderia cepacia (strain AMMD)).